An 894-amino-acid polypeptide reads, in one-letter code: Sorting nexin-14 (894 aa).

In terms of domain architecture, PXA spans 78–252 (SSKVDASLSE…LLIIFIDDSP (175 aa)). The RGS domain maps to 284 to 416 (ELKQIREQQD…CHSDEYFRQL (133 aa)). The residue at position 496 (S496) is a Phosphoserine. Residues 518 to 638 (PYVDFFEDPS…DFLSPNGGET (121 aa)) form the PX domain.

Belongs to the sorting nexin family.

It is found in the cytoplasm. Its subcellular location is the cell projection. The protein localises to the dendrite. Plays a role in maintaining normal neuronal excitability and synaptic transmission. May be involved in several stages of intracellular trafficking. This chain is Sorting nexin-14 (SNX14), found in Pongo abelii (Sumatran orangutan).